The sequence spans 382 residues: MASNRYHSINEIMESQLFYQITTPPKKTQKAQYDPEVEKFLEIIEFVKENGREPQKVPTDLTERSLASRLIGIRKDPDRMEYLKEYDEIGLLEVRSKELTIPKISSIDDILKSGLSALLGDNLNNDITRSIFDTSSLQKVTTMPEYVAKRKKIKDFGKFEELFKKCHKEITEGKRKILTFKNEQDIQSNSFYILKGVLLYVEDVGERKKAKGKTNARLRCIFENGTESDMLLRSLSAELYKHGRRVTDNEDTLLDNVREDDVSTGFIYVLKSLSTDPQISSIKNLYKIGFTTGSVENRIRNAENQSTYLYAPVEIVTTYQVFNMNASKFETAIHHALANNNLDVSILGANGKMLVPKEWFVVTLEDLQAVIDEIVMMVHLYD.

This is an uncharacterized protein from Bacillus subtilis (strain 168).